A 407-amino-acid polypeptide reads, in one-letter code: tRNA N6-adenosine threonylcarbamoyltransferase, mitochondrial (407 aa).

The N-terminal 30 residues, 1-30 (MISIKGTGRFLLDNYRIWQRRAFNRPIQLR), are a transit peptide targeting the mitochondrion. Residues histidine 145 and histidine 149 each contribute to the a divalent metal cation site. Residues 170–174 (LVSGG), aspartate 203, alanine 217, glutamate 221, 328–329 (SN), and serine 360 each bind substrate. Aspartate 361 serves as a coordination point for a divalent metal cation.

Belongs to the KAE1 / TsaD family. Homodimer. A divalent metal cation is required as a cofactor.

It is found in the mitochondrion. The enzyme catalyses L-threonylcarbamoyladenylate + adenosine(37) in tRNA = N(6)-L-threonylcarbamoyladenosine(37) in tRNA + AMP + H(+). Its function is as follows. Required for the formation of a threonylcarbamoyl group on adenosine at position 37 (t(6)A37) in mitochondrial tRNAs that read codons beginning with adenine. Probably involved in the transfer of the threonylcarbamoyl moiety of threonylcarbamoyl-AMP (TC-AMP) to the N6 group of A37. Involved in mitochondrial genome maintenance. This chain is tRNA N6-adenosine threonylcarbamoyltransferase, mitochondrial (QRI7), found in Saccharomyces cerevisiae (strain ATCC 204508 / S288c) (Baker's yeast).